Reading from the N-terminus, the 225-residue chain is Protein-L-isoaspartate O-methyltransferase (225 aa).

S-adenosyl-L-homocysteine-binding positions include 57–60 (ATVS), His-65, Ser-89, 110–111 (EH), 142–143 (DG), Thr-216, and Gln-221. Ser-60 is a catalytic residue.

This sequence belongs to the methyltransferase superfamily. L-isoaspartyl/D-aspartyl protein methyltransferase family. Monomer.

The protein localises to the cytoplasm. It is found in the cytosol. It carries out the reaction [protein]-L-isoaspartate + S-adenosyl-L-methionine = [protein]-L-isoaspartate alpha-methyl ester + S-adenosyl-L-homocysteine. Initiates the repair of damaged proteins by catalyzing methyl esterification of L-isoaspartyl and D-aspartyl residues produced by spontaneous isomerization and racemization of L-aspartyl and L-asparaginyl residues in aging peptides and proteins. This chain is Protein-L-isoaspartate O-methyltransferase (pcm-1), found in Caenorhabditis elegans.